The chain runs to 156 residues: Small ribosomal subunit protein uS7 (156 aa).

The protein belongs to the universal ribosomal protein uS7 family. In terms of assembly, part of the 30S ribosomal subunit. Contacts proteins S9 and S11.

Functionally, one of the primary rRNA binding proteins, it binds directly to 16S rRNA where it nucleates assembly of the head domain of the 30S subunit. Is located at the subunit interface close to the decoding center, probably blocks exit of the E-site tRNA. This is Small ribosomal subunit protein uS7 from Desulfovibrio desulfuricans (strain ATCC 27774 / DSM 6949 / MB).